Reading from the N-terminus, the 91-residue chain is Small ribosomal subunit protein bS16c (91 aa).

It belongs to the bacterial ribosomal protein bS16 family.

It is found in the plastid. It localises to the chloroplast. The polypeptide is Small ribosomal subunit protein bS16c (Pelargonium hortorum (Common geranium)).